The following is a 160-amino-acid chain: Transcription elongation factor GreA (160 aa).

The stretch at Glu12–Ser76 forms a coiled coil.

The protein belongs to the GreA/GreB family.

In terms of biological role, necessary for efficient RNA polymerase transcription elongation past template-encoded arresting sites. The arresting sites in DNA have the property of trapping a certain fraction of elongating RNA polymerases that pass through, resulting in locked ternary complexes. Cleavage of the nascent transcript by cleavage factors such as GreA or GreB allows the resumption of elongation from the new 3'terminus. GreA releases sequences of 2 to 3 nucleotides. The sequence is that of Transcription elongation factor GreA from Clostridium botulinum (strain Kyoto / Type A2).